We begin with the raw amino-acid sequence, 623 residues long: 1-butanol dehydrogenase (quinone) (623 aa).

The first 28 residues, 1–28 (MKKSHAKPFALRAIVVATAAALSLPAAA), serve as a signal peptide directing secretion. Residues aspartate 40, threonine 43, and aspartate 46 each coordinate Ca(2+). Glutamate 90 contacts pyrroloquinoline quinone. The cysteines at positions 134 and 135 are disulfide-linked. Residues arginine 140, threonine 184, and 202 to 204 (HGS) each bind pyrroloquinoline quinone. Residue glutamate 208 participates in Ca(2+) binding. A disordered region spans residues 235-274 (HMGRLNGKDSTPTGDPKAPSWPDDPNSPTGKVEAWSQGGG). 2 residues coordinate Ca(2+): asparagine 295 and aspartate 345. Aspartate 345 acts as the Proton acceptor in catalysis. Arginine 374 lines the pyrroloquinoline quinone pocket. A disordered region spans residues 420-440 (GKPIEKDNRPPQPKEGADKGE). Position 592 (alanine 592) interacts with pyrroloquinoline quinone.

It belongs to the bacterial PQQ dehydrogenase family. Pyrroloquinoline quinone is required as a cofactor. It depends on Ca(2+) as a cofactor.

It localises to the periplasm. It carries out the reaction butan-1-ol + a quinone = butanal + a quinol. Functionally, involved in the metabolism of butane. May function primarily in energy generation. Catalyzes the oxidation of 1-butanol to 1-butanal. Also able to use 2-butanol and butyraldehyde, although the affinity is comparatively low. The sequence is that of 1-butanol dehydrogenase (quinone) from Thauera butanivorans (strain ATCC 43655 / DSM 2080 / JCM 20651 / CCUG 51053 / NBRC 103042 / IAM 12574 / Bu B1211) (Pseudomonas butanovora).